We begin with the raw amino-acid sequence, 953 residues long: Vacuolar membrane protease (953 aa).

At methionine 1–proline 16 the chain is on the cytoplasmic side. The helical transmembrane segment at tryptophan 17 to isoleucine 37 threads the bilayer. Residues histidine 38 to leucine 382 lie on the Vacuolar side of the membrane. 2 N-linked (GlcNAc...) asparagine glycosylation sites follow: asparagine 53 and asparagine 115. The Zn(2+) site is built by histidine 165 and aspartate 177. Glutamate 211 (proton acceptor) is an active-site residue. Glutamate 212, glutamate 237, and histidine 310 together coordinate Zn(2+). A helical transmembrane segment spans residues phenylalanine 383 to isoleucine 403. Residues leucine 404 to tyrosine 437 are Cytoplasmic-facing. Residues proline 438 to phenylalanine 458 traverse the membrane as a helical segment. Topologically, residues asparagine 459 to histidine 464 are vacuolar. Residues serine 465 to valine 485 form a helical membrane-spanning segment. Topologically, residues serine 486–arginine 499 are cytoplasmic. Residues valine 500 to tyrosine 520 form a helical membrane-spanning segment. At glutamine 521 to tryptophan 524 the chain is on the vacuolar side. The chain crosses the membrane as a helical span at residues alanine 525 to isoleucine 545. Residues serine 546–glutamine 650 lie on the Cytoplasmic side of the membrane. Positions alanine 570–glycine 599 are disordered. The segment covering glutamate 581–proline 591 has biased composition (acidic residues). Residues phenylalanine 651 to glycine 671 traverse the membrane as a helical segment. Residues serine 672–leucine 684 lie on the Vacuolar side of the membrane. The chain crosses the membrane as a helical span at residues phenylalanine 685 to valine 705. Residues histidine 706–histidine 711 are Cytoplasmic-facing. The chain crosses the membrane as a helical span at residues isoleucine 712–proline 732. At phenylalanine 733–alanine 953 the chain is on the vacuolar side. Asparagine 779 is a glycosylation site (N-linked (GlcNAc...) asparagine).

This sequence belongs to the peptidase M28 family. The cofactor is Zn(2+).

The protein resides in the vacuole membrane. Functionally, may be involved in vacuolar sorting and osmoregulation. This Emericella nidulans (strain FGSC A4 / ATCC 38163 / CBS 112.46 / NRRL 194 / M139) (Aspergillus nidulans) protein is Vacuolar membrane protease.